The primary structure comprises 356 residues: Histidinol-phosphate aminotransferase (356 aa).

Residue K210 is modified to N6-(pyridoxal phosphate)lysine.

It belongs to the class-II pyridoxal-phosphate-dependent aminotransferase family. Histidinol-phosphate aminotransferase subfamily. In terms of assembly, homodimer. The cofactor is pyridoxal 5'-phosphate.

The catalysed reaction is L-histidinol phosphate + 2-oxoglutarate = 3-(imidazol-4-yl)-2-oxopropyl phosphate + L-glutamate. The protein operates within amino-acid biosynthesis; L-histidine biosynthesis; L-histidine from 5-phospho-alpha-D-ribose 1-diphosphate: step 7/9. This is Histidinol-phosphate aminotransferase (hisC) from Acetobacter pasteurianus (Acetobacter turbidans).